Consider the following 332-residue polypeptide: DNA-directed RNA polymerase 2A (332 aa).

Active-site residues include D33, K108, and D265.

This sequence belongs to the phage and mitochondrial RNA polymerase family.

The enzyme catalyses RNA(n) + a ribonucleoside 5'-triphosphate = RNA(n+1) + diphosphate. Functionally, DNA-dependent RNA polymerase catalyzes the transcription of DNA into RNA using the four ribonucleoside triphosphates as substrates. The protein is DNA-directed RNA polymerase 2A (RPOT2-SYL) of Nicotiana tabacum (Common tobacco).